The chain runs to 420 residues: Exodeoxyribonuclease 7 large subunit (420 aa).

The protein belongs to the XseA family. As to quaternary structure, heterooligomer composed of large and small subunits.

The protein localises to the cytoplasm. The enzyme catalyses Exonucleolytic cleavage in either 5'- to 3'- or 3'- to 5'-direction to yield nucleoside 5'-phosphates.. Bidirectionally degrades single-stranded DNA into large acid-insoluble oligonucleotides, which are then degraded further into small acid-soluble oligonucleotides. In Helicobacter acinonychis (strain Sheeba), this protein is Exodeoxyribonuclease 7 large subunit.